A 447-amino-acid polypeptide reads, in one-letter code: tRNA modification GTPase MnmE (447 aa).

Residues R24, E81, and K120 each contribute to the (6S)-5-formyl-5,6,7,8-tetrahydrofolate site. A TrmE-type G domain is found at 216-371 (GLNVAIAGKP…LRKELSNISG (156 aa)). N226 contributes to the K(+) binding site. Residues 226 to 231 (NAGKSS), 245 to 251 (TDIAGTT), and 270 to 273 (DTAG) contribute to the GTP site. S230 is a Mg(2+) binding site. K(+) is bound by residues T245, I247, and T250. T251 contacts Mg(2+). Residue K447 coordinates (6S)-5-formyl-5,6,7,8-tetrahydrofolate.

Belongs to the TRAFAC class TrmE-Era-EngA-EngB-Septin-like GTPase superfamily. TrmE GTPase family. Homodimer. Heterotetramer of two MnmE and two MnmG subunits. Requires K(+) as cofactor.

It localises to the cytoplasm. Its function is as follows. Exhibits a very high intrinsic GTPase hydrolysis rate. Involved in the addition of a carboxymethylaminomethyl (cmnm) group at the wobble position (U34) of certain tRNAs, forming tRNA-cmnm(5)s(2)U34. In Vesicomyosocius okutanii subsp. Calyptogena okutanii (strain HA), this protein is tRNA modification GTPase MnmE.